Here is a 184-residue protein sequence, read N- to C-terminus: NADH-quinone oxidoreductase subunit B 1 (184 aa).

The [4Fe-4S] cluster site is built by Cys-37, Cys-38, Cys-103, and Cys-132.

The protein belongs to the complex I 20 kDa subunit family. In terms of assembly, NDH-1 is composed of 14 different subunits. Subunits NuoB, C, D, E, F, and G constitute the peripheral sector of the complex. [4Fe-4S] cluster serves as cofactor.

It is found in the cell membrane. The catalysed reaction is a quinone + NADH + 5 H(+)(in) = a quinol + NAD(+) + 4 H(+)(out). Functionally, NDH-1 shuttles electrons from NADH, via FMN and iron-sulfur (Fe-S) centers, to quinones in the respiratory chain. The immediate electron acceptor for the enzyme in this species is believed to be a menaquinone. Couples the redox reaction to proton translocation (for every two electrons transferred, four hydrogen ions are translocated across the cytoplasmic membrane), and thus conserves the redox energy in a proton gradient. The protein is NADH-quinone oxidoreductase subunit B 1 of Streptomyces griseus subsp. griseus (strain JCM 4626 / CBS 651.72 / NBRC 13350 / KCC S-0626 / ISP 5235).